We begin with the raw amino-acid sequence, 201 residues long: Riboflavin synthase (201 aa).

2 Lumazine-binding repeats span residues 1-97 (MFTG…LGGH) and 98-197 (IVQG…ERLM). 2,4-dihydroxypteridine contacts are provided by residues 4–6 (GIV), 47–49 (CLT), 62–67 (DVMAET), 101–103 (GHV), Lys-136, 145–147 (SLT), and 162–167 (SLIPTT).

In terms of assembly, homotrimer.

It carries out the reaction 2 6,7-dimethyl-8-(1-D-ribityl)lumazine + H(+) = 5-amino-6-(D-ribitylamino)uracil + riboflavin. It functions in the pathway cofactor biosynthesis; riboflavin biosynthesis; riboflavin from 2-hydroxy-3-oxobutyl phosphate and 5-amino-6-(D-ribitylamino)uracil: step 2/2. In terms of biological role, catalyzes the dismutation of two molecules of 6,7-dimethyl-8-ribityllumazine, resulting in the formation of riboflavin and 5-amino-6-(D-ribitylamino)uracil. This chain is Riboflavin synthase (ribE), found in Mycobacterium bovis (strain ATCC BAA-935 / AF2122/97).